Consider the following 906-residue polypeptide: Serine-aspartate repeat-containing protein C (906 aa).

Positions 1-50 (MNNKKTATNRKGMIPNRLNKFSIRKYSVGTASILVGTTLIFGLSGHEAKA) are cleaved as a signal peptide. The segment at 51 to 127 (AEHTNGELNQ…QPTKKNNDAT (77 aa)) is disordered. The ligand binding A region stretch occupies residues 51–486 (AEHTNGELNQ…GSSTANGDQK (436 aa)). 2 stretches are compositionally biased toward polar residues: residues 56-71 (GELN…PSEN) and 80-119 (RQQN…STQP). 2 consecutive CNA-B domains span residues 487-597 (KYNL…YKTP) and 598-708 (KYSL…EEET). Residues 669-881 (KQTGTNTTED…TGSENNGSNN (213 aa)) form a disordered region. 2 stretches are compositionally biased toward acidic residues: residues 676–686 (TEDDKDADGGE) and 703–845 (YFEE…DSDS). Residues 869 to 873 (LPETG) carry the LPXTG sorting signal motif. Pentaglycyl murein peptidoglycan amidated threonine is present on Thr872. A propeptide spans 873-906 (GSENNGSNNATLFGGLFAALGSLLLFGRRKKQNK) (removed by sortase).

This sequence belongs to the serine-aspartate repeat-containing protein (SDr) family. As to quaternary structure, homodimerizes; via N2-Domain. Interacts with host NRXN1; this interaction mediates bacterial attachment to host cells.

Its subcellular location is the secreted. The protein resides in the cell wall. In terms of biological role, cell surface-associated calcium-binding protein which plays an important role in adhesion and pathogenesis. Mediates interactions with components of the extracellular matrix such as host NRXN1 to promote bacterial adhesion. The protein is Serine-aspartate repeat-containing protein C (sdrC) of Staphylococcus aureus (strain MRSA252).